A 324-amino-acid chain; its full sequence is NADH-ubiquinone oxidoreductase chain 1 (324 aa).

8 helical membrane passes run 9–29, 75–95, 106–126, 146–166, 177–197, 228–248, 259–279, and 299–319; these read LINP…LTLI, FLFL…WAPM, LGIL…LGSG, ISYE…SGGY, SIWL…STLA, LFFL…AVLF, ELTT…FLWV, and FLPL…ALAG.

It belongs to the complex I subunit 1 family.

The protein resides in the mitochondrion inner membrane. The enzyme catalyses a ubiquinone + NADH + 5 H(+)(in) = a ubiquinol + NAD(+) + 4 H(+)(out). In terms of biological role, core subunit of the mitochondrial membrane respiratory chain NADH dehydrogenase (Complex I) that is believed to belong to the minimal assembly required for catalysis. Complex I functions in the transfer of electrons from NADH to the respiratory chain. The immediate electron acceptor for the enzyme is believed to be ubiquinone. The polypeptide is NADH-ubiquinone oxidoreductase chain 1 (MT-ND1) (Carassius auratus (Goldfish)).